We begin with the raw amino-acid sequence, 37 residues long: Large ribosomal subunit protein bL36c (37 aa).

Belongs to the bacterial ribosomal protein bL36 family.

It is found in the plastid. The protein resides in the chloroplast. This chain is Large ribosomal subunit protein bL36c, found in Oenothera argillicola (Appalachian evening primrose).